The primary structure comprises 107 residues: Nucleoid-associated protein amb4104 (107 aa).

This sequence belongs to the YbaB/EbfC family. Homodimer.

Its subcellular location is the cytoplasm. The protein localises to the nucleoid. Binds to DNA and alters its conformation. May be involved in regulation of gene expression, nucleoid organization and DNA protection. In Paramagnetospirillum magneticum (strain ATCC 700264 / AMB-1) (Magnetospirillum magneticum), this protein is Nucleoid-associated protein amb4104.